Reading from the N-terminus, the 103-residue chain is Histone H4 (103 aa).

Gly residues predominate over residues 1-14 (MTGRGKGGKGLGKG). Positions 1–20 (MTGRGKGGKGLGKGGAKRHR) are disordered. Threonine 2 is modified (N-acetylthreonine). N6-acetyl-N6-methyllysine; alternate is present on lysine 6. 4 positions are modified to N6-acetyllysine: lysine 6, lysine 9, lysine 13, and lysine 17. Lysine 13 is subject to N6-acetyl-N6-methyllysine; alternate. Lysine 21 is subject to N6,N6-dimethyllysine. An N6-methyllysine modification is found at lysine 32.

The protein belongs to the histone H4 family. The nucleosome is a histone octamer containing two molecules each of H2A, H2B, H3 and H4 assembled in one H3-H4 heterotetramer and two H2A-H2B heterodimers. The octamer wraps approximately 147 bp of DNA.

Its subcellular location is the nucleus. It localises to the chromosome. In terms of biological role, core component of nucleosome. Nucleosomes wrap and compact DNA into chromatin, limiting DNA accessibility to the cellular machineries which require DNA as a template. Histones thereby play a central role in transcription regulation, DNA repair, DNA replication and chromosomal stability. DNA accessibility is regulated via a complex set of post-translational modifications of histones, also called histone code, and nucleosome remodeling. A mixture of histones H2B and H4 has antimicrobial activity against the Gram-positive bacterium M.luteus. This is Histone H4 from Penaeus vannamei (Whiteleg shrimp).